A 487-amino-acid chain; its full sequence is 3-octaprenyl-4-hydroxybenzoate carboxy-lyase (487 aa).

Residue N172 coordinates Mn(2+). Prenylated FMN is bound by residues 175–177 (IYR), 189–191 (RWL), and 194–195 (RG). Residue E238 participates in Mn(2+) binding. The Proton donor role is filled by D287.

It belongs to the UbiD family. As to quaternary structure, homohexamer. It depends on prenylated FMN as a cofactor. Mn(2+) serves as cofactor.

The protein localises to the cell membrane. It carries out the reaction a 4-hydroxy-3-(all-trans-polyprenyl)benzoate + H(+) = a 2-(all-trans-polyprenyl)phenol + CO2. It functions in the pathway cofactor biosynthesis; ubiquinone biosynthesis. Catalyzes the decarboxylation of 3-octaprenyl-4-hydroxy benzoate to 2-octaprenylphenol, an intermediate step in ubiquinone biosynthesis. The polypeptide is 3-octaprenyl-4-hydroxybenzoate carboxy-lyase (Dechloromonas aromatica (strain RCB)).